Consider the following 191-residue polypeptide: Elongation factor P-like protein (191 aa).

Belongs to the elongation factor P family.

This is Elongation factor P-like protein from Photobacterium profundum (strain SS9).